We begin with the raw amino-acid sequence, 143 residues long: Nucleoside diphosphate kinase (143 aa).

Positions 11, 59, 87, 93, 104, and 114 each coordinate ATP. The active-site Pros-phosphohistidine intermediate is the His-117.

This sequence belongs to the NDK family. Homotetramer. Mg(2+) serves as cofactor.

It is found in the cytoplasm. The catalysed reaction is a 2'-deoxyribonucleoside 5'-diphosphate + ATP = a 2'-deoxyribonucleoside 5'-triphosphate + ADP. It carries out the reaction a ribonucleoside 5'-diphosphate + ATP = a ribonucleoside 5'-triphosphate + ADP. Major role in the synthesis of nucleoside triphosphates other than ATP. The ATP gamma phosphate is transferred to the NDP beta phosphate via a ping-pong mechanism, using a phosphorylated active-site intermediate. The chain is Nucleoside diphosphate kinase from Shewanella denitrificans (strain OS217 / ATCC BAA-1090 / DSM 15013).